A 509-amino-acid polypeptide reads, in one-letter code: Protein disulfide-isomerase (509 aa).

An N-terminal signal peptide occupies residues 1–18 (MLRRAVLCLALAVTAGWA). The Thioredoxin 1 domain occupies 19–135 (WAAEEEDNVL…IVNWLKKRTG (117 aa)). Active-site nucleophile residues include C54 and C57. Residues C54 and C57 are joined by a disulfide bond. N6-succinyllysine occurs at positions 223 and 272. 2 positions are modified to phosphoserine: S332 and S358. Residues 347 to 476 (FLEGKIKPHL…FKKFLESGGQ (130 aa)) form the Thioredoxin 2 domain. Residues C398 and C401 each act as nucleophile in the active site. A disulfide bridge connects residues C398 and C401. Phosphoserine is present on S428. The disordered stretch occupies residues 471–509 (LESGGQDGAGDEDGLEDLEEAEEPDLEEDDDQKAVRDEL). The segment covering 479–501 (AGDEDGLEDLEEAEEPDLEEDDD) has biased composition (acidic residues). The Prevents secretion from ER signature appears at 506–509 (RDEL).

Belongs to the protein disulfide isomerase family. As to quaternary structure, heterodimer; heterodimerizes with the protein microsomal triglyceride transfer MTTP. Homodimer. Monomers and homotetramers may also occur. Interacts with P4HA2, forming a heterotetramer consisting of 2 alpha subunits (P4HA2) and 2 beta (P4HB), where P4HB plays the role of a structural subunit; this tetramer catalyzes the formation of 4-hydroxyproline in collagen. Also constitutes the structural subunit of the microsomal triacylglycerol transfer protein MTTP in mammalian cells. Stabilizes both enzymes and retain them in the ER without contributing to the catalytic activity. Binds UBQLN1. Interacts with ERO1B. Interacts with ILDR2. Interacts with ERN1/IRE1A (via N-terminus); the interaction is enhanced by phosphorylation of P4HB by FAM20C in response to endoplasmic reticulum stress and results in attenuation of ERN1 activity. Post-translationally, phosphorylation of Ser-358 by FAM20C is induced by endoplasmic reticulum stress and results in a functional switch from oxidoreductase to molecular chaperone. It also promotes interaction with ERN1.

Its subcellular location is the endoplasmic reticulum. The protein resides in the endoplasmic reticulum lumen. The protein localises to the melanosome. It is found in the cell membrane. The enzyme catalyses Catalyzes the rearrangement of -S-S- bonds in proteins.. This multifunctional protein catalyzes the formation, breakage and rearrangement of disulfide bonds. At the cell surface, seems to act as a reductase that cleaves disulfide bonds of proteins attached to the cell. May therefore cause structural modifications of exofacial proteins. Inside the cell, seems to form/rearrange disulfide bonds of nascent proteins. At high concentrations and following phosphorylation by FAM20C, functions as a chaperone that inhibits aggregation of misfolded proteins. At low concentrations, facilitates aggregation (anti-chaperone activity). May be involved with other chaperones in the structural modification of the TG precursor in hormone biogenesis. Also acts as a structural subunit of various enzymes such as prolyl 4-hydroxylase and microsomal triacylglycerol transfer protein MTTP. Receptor for LGALS9; the interaction retains P4HB at the cell surface of Th2 T helper cells, increasing disulfide reductase activity at the plasma membrane, altering the plasma membrane redox state and enhancing cell migration. The protein is Protein disulfide-isomerase (P4HB) of Oryctolagus cuniculus (Rabbit).